We begin with the raw amino-acid sequence, 253 residues long: MNFAIETVNLNVYYGQNHVIKDVDLKIPNKGVFALMGPSGCGKSTMLRTFNRLIELNEDARVEGEVRLFGENIYSEDVDPIEVRKKVGMVFQYPNPFPHLTIYDNVAIGLKLNGLVKSREELDERVEWALKKAALWDEVKDRLNDYPGNLSGGQRQRLVIARALAMKPEVLLMDEPTANIDPVGTAKIEELLLELKEDYTIVLVTHSPAQAARVADYVAFLYLGELIEVGPARKVFENPEHELTEKYVTGALG.

In terms of domain architecture, ABC transporter spans 5 to 248; the sequence is IETVNLNVYY…PEHELTEKYV (244 aa). ATP is bound at residue 37 to 44; that stretch reads GPSGCGKS.

It belongs to the ABC transporter superfamily. Phosphate importer (TC 3.A.1.7) family. In terms of assembly, the complex is composed of two ATP-binding proteins (PstB), two transmembrane proteins (PstC and PstA) and a solute-binding protein (PstS).

The protein resides in the cell membrane. The enzyme catalyses phosphate(out) + ATP + H2O = ADP + 2 phosphate(in) + H(+). Its function is as follows. Part of the ABC transporter complex PstSACB involved in phosphate import. Responsible for energy coupling to the transport system. This Thermococcus kodakarensis (strain ATCC BAA-918 / JCM 12380 / KOD1) (Pyrococcus kodakaraensis (strain KOD1)) protein is Phosphate import ATP-binding protein PstB.